The primary structure comprises 459 residues: ATP-dependent protease ATPase subunit HslU (459 aa).

Residues valine 18, 60–65 (GVGKTE), aspartate 269, glutamate 337, and arginine 409 each bind ATP.

The protein belongs to the ClpX chaperone family. HslU subfamily. A double ring-shaped homohexamer of HslV is capped on each side by a ring-shaped HslU homohexamer. The assembly of the HslU/HslV complex is dependent on binding of ATP.

The protein resides in the cytoplasm. Functionally, ATPase subunit of a proteasome-like degradation complex; this subunit has chaperone activity. The binding of ATP and its subsequent hydrolysis by HslU are essential for unfolding of protein substrates subsequently hydrolyzed by HslV. HslU recognizes the N-terminal part of its protein substrates and unfolds these before they are guided to HslV for hydrolysis. The polypeptide is ATP-dependent protease ATPase subunit HslU (Myxococcus xanthus (strain DK1622)).